Reading from the N-terminus, the 278-residue chain is Indole-3-glycerol phosphate synthase (278 aa).

Belongs to the TrpC family.

It carries out the reaction 1-(2-carboxyphenylamino)-1-deoxy-D-ribulose 5-phosphate + H(+) = (1S,2R)-1-C-(indol-3-yl)glycerol 3-phosphate + CO2 + H2O. The protein operates within amino-acid biosynthesis; L-tryptophan biosynthesis; L-tryptophan from chorismate: step 4/5. This is Indole-3-glycerol phosphate synthase from Pseudomonas aeruginosa (strain UCBPP-PA14).